We begin with the raw amino-acid sequence, 143 residues long: Large ribosomal subunit protein uL13 (143 aa).

It belongs to the universal ribosomal protein uL13 family. As to quaternary structure, part of the 50S ribosomal subunit.

This protein is one of the early assembly proteins of the 50S ribosomal subunit, although it is not seen to bind rRNA by itself. It is important during the early stages of 50S assembly. This is Large ribosomal subunit protein uL13 from Finegoldia magna (strain ATCC 29328 / DSM 20472 / WAL 2508) (Peptostreptococcus magnus).